The chain runs to 610 residues: Alpha-fetoprotein (610 aa).

The first 18 residues, 1–18, serve as a signal peptide directing secretion; the sequence is MKWVVSIFLIVLLNFTES. Albumin domains follow at residues 19–210, 211–403, and 404–602; these read RTMH…ASIT, KELR…EELE, and KYIQ…ALIS. Residue histidine 22 participates in Cu(2+) binding. Intrachain disulfides connect cysteine 99–cysteine 114, cysteine 113–cysteine 124, cysteine 148–cysteine 193, cysteine 192–cysteine 201, cysteine 224–cysteine 270, cysteine 269–cysteine 277, cysteine 289–cysteine 303, and cysteine 302–cysteine 314. Phosphoserine occurs at positions 111, 115, and 117. Asparagine 251 carries N-linked (GlcNAc...) asparagine glycosylation. At serine 345 the chain carries Phosphoserine. 7 cysteine pairs are disulfide-bonded: cysteine 385-cysteine 394, cysteine 417-cysteine 463, cysteine 462-cysteine 473, cysteine 486-cysteine 502, cysteine 501-cysteine 512, cysteine 539-cysteine 584, and cysteine 583-cysteine 592.

Belongs to the ALB/AFP/VDB family. Dimeric and trimeric forms have been found in addition to the monomeric form. Plasma. Synthesized by the fetal liver and yolk sac.

Its subcellular location is the secreted. Functionally, binds copper, nickel, and fatty acids as well as, and bilirubin less well than, serum albumin. The chain is Alpha-fetoprotein (AFP) from Sus scrofa (Pig).